The following is a 146-amino-acid chain: Hemoglobin subunit beta-1 (146 aa).

The region spanning 2 to 146 (EWTDQERATI…VVSALGKQYH (145 aa)) is the Globin domain. The heme b site is built by His63 and His92.

Belongs to the globin family. In terms of assembly, hb1 is a heterotetramer of two alpha-1 chains and two beta-1 chains. Hb2 is a heterotetramer of two alpha-2 chains and two beta-1 chains. HbC is a heterotetramer of two alpha-1 chains and two beta-2 chains. In terms of tissue distribution, red blood cells.

Involved in oxygen transport from gills to the various peripheral tissues. This Eleginops maclovinus (Patagonian blennie) protein is Hemoglobin subunit beta-1.